A 558-amino-acid polypeptide reads, in one-letter code: Acid-sensing ion channel 4-B (558 aa).

The Cytoplasmic segment spans residues 1 to 71 (MPIEFVCKIK…TSERLGFRQT (71 aa)). Residues 72–92 (LWGLALLVSLGLFLYQATWSA) form a helical membrane-spanning segment. At 93-433 (ATYLERPHLA…ETIEQKKAYD (341 aa)) the chain is on the extracellular side. Intrachain disulfides connect C120–C204 and C182–C189. N140, N183, N188, N210, and N245 each carry an N-linked (GlcNAc...) asparagine glycan. Cystine bridges form between C298/C373, C317/C369, C321/C367, C330/C351, and C332/C344. Residue N374 is glycosylated (N-linked (GlcNAc...) asparagine). A helical transmembrane segment spans residues 434 to 454 (IAGLLGDIGGQMGLFIGASIL). Positions 450 to 452 (GAS) match the GAS motif; ion selectivity filter motif. The Cytoplasmic portion of the chain corresponds to 455–558 (TILEILDYIY…QQAVQQDFAC (104 aa)).

The protein belongs to the amiloride-sensitive sodium channel (TC 1.A.6) family. ASIC4 subfamily. Homotrimer. Heterotrimer; with other ASIC proteins producing functional channels. As to expression, expressed in central nervous system.

The protein localises to the cell membrane. The catalysed reaction is Na(+)(in) = Na(+)(out). In terms of biological role, does not exhibit measurable stand-alone pH-gated sodium channel activity but may form pH-gated heterotrimeric sodium channels. This chain is Acid-sensing ion channel 4-B, found in Danio rerio (Zebrafish).